Here is a 232-residue protein sequence, read N- to C-terminus: Endonuclease V (232 aa).

The Mg(2+) site is built by Asp-43 and Asp-109.

The protein belongs to the endonuclease V family. Requires Mg(2+) as cofactor.

Its subcellular location is the cytoplasm. It carries out the reaction Endonucleolytic cleavage at apurinic or apyrimidinic sites to products with a 5'-phosphate.. In terms of biological role, DNA repair enzyme involved in the repair of deaminated bases. Selectively cleaves double-stranded DNA at the second phosphodiester bond 3' to a deoxyinosine leaving behind the intact lesion on the nicked DNA. This chain is Endonuclease V, found in Thermofilum pendens (strain DSM 2475 / Hrk 5).